Consider the following 96-residue polypeptide: RNA-binding protein Hfq (96 aa).

The region spanning 9-68 (DPYLNALRRERIPVSIYLVNGIKLQGQIESFDQFVILLKNTVNQMVYKHAISTVVPARSV) is the Sm domain.

The protein belongs to the Hfq family. As to quaternary structure, homohexamer.

RNA chaperone that binds small regulatory RNA (sRNAs) and mRNAs to facilitate mRNA translational regulation in response to envelope stress, environmental stress and changes in metabolite concentrations. Also binds with high specificity to tRNAs. The chain is RNA-binding protein Hfq from Histophilus somni (strain 129Pt) (Haemophilus somnus).